Reading from the N-terminus, the 654-residue chain is Pentatricopeptide repeat-containing protein At5g61400 (654 aa).

16 PPR repeats span residues 37–71, 74–104, 131–161, 163–197, 198–232, 233–267, 268–302, 303–337, 338–372, 373–407, 408–442, 443–477, 478–512, 513–543, 548–582, and 583–617; these read SSFSSSSLAEAILKCRSAEEAFKLFETSSRSRVSK, DLQSFSAVIHVLTGAHKYTLARCLIKSLIER, SIGVFSLLIMEFLEMGLFEEALWVSREMKCS, DSKACLSILNGLVRRRRFDSVWVDYQLMISRGLVP, DVHIYFVLFQCCFKQGLYSKKEKLLDEMTSLGIKP, NVYIYTIYILDLCRDNKMEEAEKMFELMKKHGVLP, NLYTYSAMIDGYCKTGNVRQAYGLYKEILVAELLP, NVVVFGTLVDGFCKARELVTARSLFVHMVKFGVDP, NLYVYNCLIHGHCKSGNMLEAVGLLSEMESLNLSP, DVFTYTILINGLCIEDQVAEANRLFQKMKNERIFP, SSATYNSLIHGYCKEYNMEQALDLCSEMTASGVEP, NIITFSTLIDGYCNVRDIKAAMGLYFEMTIKGIVP, DVVTYTALIDAHFKEANMKEALRLYSDMLEAGIHP, NDHTFACLVDGFWKEGRLSVAIDFYQENNQQ, NHVGFTCLIEGLCQNGYILRASRFFSDMRSCGITP, and DICSYVSMLKGHLQEKRITDTMMLQCDMIKTGILP.

It belongs to the PPR family. P subfamily.

In Arabidopsis thaliana (Mouse-ear cress), this protein is Pentatricopeptide repeat-containing protein At5g61400.